The sequence spans 717 residues: DNA polymerase iota (717 aa).

A disordered region spans residues 1 to 22 (MEPLHAGAAGSSRAVCSQGPPT). The 214-residue stretch at 30–243 (IVHVDLDCFY…NHIKEIPGIG (214 aa)) folds into the UmuC domain. Positions 34 and 35 each coordinate Mg(2+). Residues Tyr39 and Arg71 each contribute to the a 2'-deoxyribonucleoside 5'-triphosphate site. Asp126 is a Mg(2+) binding site. Glu127 serves as the catalytic Proton acceptor. DNA-binding regions lie at residues 300–307 (QSFSEEDT) and 343–360 (RLVI…ESRQ). The Ubiquitin-binding 1 (UBM1) motif lies at 500-517 (VDQEVFKQLPADIQEEIL). Disordered regions lie at residues 549-589 (QMQA…SHPS), 603-622 (KDEQ…FSST), and 644-687 (HRTV…DIDP). Low complexity predominate over residues 575–589 (PGTSGLSPGSTSHPS). Polar residues-rich tracts occupy residues 607–622 (TSQG…FSST) and 652–662 (QTATASHQGLE). Basic and acidic residues predominate over residues 665–679 (QGLESRELDSAEEKL). Residues 685 to 702 (IDPQVFYELPEEVQKELM) carry the Ubiquitin-binding 2 (UBM2) motif.

Belongs to the DNA polymerase type-Y family. In terms of assembly, interacts with POLH. Interacts with REV1. Interacts with ubiquitin. Mg(2+) is required as a cofactor. Requires Mn(2+) as cofactor. In terms of processing, monoubiquitinated. Protein monoubiquitination prevents POLI binding to ubiquitin via the ubiquitin-binding motif 1 and ubiquitin-binding motif 2. Detected in testis, and at very low levels in spleen, lung and brain. Detected in round spermatids, but not in prophase spermatocytes.

It is found in the nucleus. It carries out the reaction DNA(n) + a 2'-deoxyribonucleoside 5'-triphosphate = DNA(n+1) + diphosphate. Its function is as follows. Error-prone DNA polymerase specifically involved in DNA repair. Plays an important role in translesion synthesis, where the normal high-fidelity DNA polymerases cannot proceed and DNA synthesis stalls. Favors Hoogsteen base-pairing in the active site. Inserts the correct base with high-fidelity opposite an adenosine template. Exhibits low fidelity and efficiency opposite a thymidine template, where it will preferentially insert guanosine. May play a role in hypermutation of immunoglobulin genes. Forms a Schiff base with 5'-deoxyribose phosphate at abasic sites, but may not have lyase activity. This is DNA polymerase iota (Poli) from Mus musculus (Mouse).